The chain runs to 205 residues: Phosphoenolpyruvate guanylyltransferase (205 aa).

The phosphoenolpyruvate site is built by Thr-137, Gly-153, and Ser-156.

This sequence belongs to the CofC family.

The enzyme catalyses phosphoenolpyruvate + GTP + H(+) = enolpyruvoyl-2-diphospho-5'-guanosine + diphosphate. It participates in cofactor biosynthesis; coenzyme F420 biosynthesis. Guanylyltransferase that catalyzes the activation of phosphoenolpyruvate (PEP) as enolpyruvoyl-2-diphospho-5'-guanosine, via the condensation of PEP with GTP. It is involved in the biosynthesis of coenzyme F420, a hydride carrier cofactor. The chain is Phosphoenolpyruvate guanylyltransferase from Rubrobacter xylanophilus (strain DSM 9941 / JCM 11954 / NBRC 16129 / PRD-1).